The sequence spans 97 residues: RxLR effector protein CRE10 (97 aa).

The first 21 residues, methionine 1–alanine 21, serve as a signal peptide directing secretion. Residues arginine 48–arginine 66 carry the RxLR-dEER motif.

It belongs to the RxLR effector family.

Its subcellular location is the secreted. It is found in the host cell. Its function is as follows. Effector that is involved in host plant infection. Contributes to virulence during the early infection stage, by inhibiting plant defense responses induced by both PAMP-triggered immunity (PTI) and effector-triggered immunity (ETI). This is RxLR effector protein CRE10 from Phytophthora infestans (strain T30-4) (Potato late blight agent).